The sequence spans 198 residues: Cyclotides mra4/mra5 (198 aa).

Positions 1 to 22 are cleaved as a signal peptide; sequence MESNKMVVGVLLIAAFALPALA. The propeptide occupies 23–79; sequence LFERDVITHETIEAVLKKSTPNSNTMLQEDAINALTGKTLISQTILEETLLKNGVVG. Disulfide bonds link Cys84-Cys100, Cys88-Cys102, and Cys93-Cys107. Residues 111 to 163 constitute a propeptide that is removed on maturation; the sequence is SLALPTLEKDVITPEALEAVLKSNGGAIVNTKTIISNAIFEETLLNNANHVLG. Disulfide bonds link Cys167-Cys183, Cys171-Cys185, and Cys176-Cys190. Residues 194–198 constitute a propeptide that is removed on maturation; it reads SLALN.

The protein belongs to the cyclotide family. Bracelet subfamily. Post-translationally, these are cyclic peptides. In terms of processing, the mature peptides contain 3 disulfide bonds each.

Probably participates in a plant defense mechanism. The polypeptide is Cyclotides mra4/mra5 (Melicytus ramiflorus (Whitey wood)).